Reading from the N-terminus, the 541-residue chain is MESQRNLLLIGLLFVSFLLWQQWESDKAPKPATEVTAAAQIHDQAINSDVPTADAGVPATVAATQNLILVTTDQLEIQINPVGGDIVHAALLTHKLEQNEEAPFVLLEQKNNFSYIAQSGLIGRDGIDSAASGRAKFAAAADAYTLADGQDTLEVPLTLTTDAGVTFTKVFVFKRGQFDVGVDYRVANNSAAPVQVQMYGQIKQTITASESSMMMPTYRGAAFSTADVRYEKYSFDDMGKKDLEEPTLGGWVAMLQHYFVSAWVPAAADKNTLFTSVSAGGLANIGFKGSVHDVAPGATETISATFYVGPKDQAALSALSDTLNLVVDYGFLWWLAVPIHWILMFFQSLVHNWGVAIILVTLTVRGLLYPLTKAQYVSMAKMRNLQPKLQDLKDRFGDDRQKMGQAMMELYKKEKVNPMGGCLPILLQMPIFIALYWVLLESVELRHAPFMLWIQDLSVQDPYYVLPLLMGASMWAMQKMQPMAPNMDPMQQKMLQWMPMIFTVFFLWFPAGLVLYWLVGNLVAITQQKIIYASLEKKGLK.

6 consecutive transmembrane segments (helical) span residues 6 to 26 (NLLLIGLLFVSFLLWQQWESD), 326 to 346 (VVDYGFLWWLAVPIHWILMFF), 349 to 369 (LVHNWGVAIILVTLTVRGLLY), 420 to 440 (GGCLPILLQMPIFIALYWVLL), 457 to 477 (LSVQDPYYVLPLLMGASMWAM), and 500 to 520 (MIFTVFFLWFPAGLVLYWLVG).

It belongs to the OXA1/ALB3/YidC family. Type 1 subfamily. In terms of assembly, interacts with the Sec translocase complex via SecD. Specifically interacts with transmembrane segments of nascent integral membrane proteins during membrane integration.

Its subcellular location is the cell inner membrane. In terms of biological role, required for the insertion and/or proper folding and/or complex formation of integral membrane proteins into the membrane. Involved in integration of membrane proteins that insert both dependently and independently of the Sec translocase complex, as well as at least some lipoproteins. Aids folding of multispanning membrane proteins. This chain is Membrane protein insertase YidC, found in Shewanella amazonensis (strain ATCC BAA-1098 / SB2B).